The primary structure comprises 396 residues: Putative protein IntB (396 aa).

A Core-binding (CB) domain is found at 71–151 (RTFKEVAIEW…RTTAIMRYAV (81 aa)). The region spanning 174–367 (QHRPALELKR…EHLEERRLML (194 aa)) is the Tyr recombinase domain. Active-site residues include arginine 213, lysine 252, histidine 316, arginine 319, and histidine 343. The O-(3'-phospho-DNA)-tyrosine intermediate role is filled by tyrosine 353.

This sequence belongs to the 'phage' integrase family.

In Escherichia coli (strain K12), this protein is Putative protein IntB (intB).